The primary structure comprises 212 residues: Thymidylate kinase (212 aa).

An ATP-binding site is contributed by 11 to 18 (GPEGAGKT).

The protein belongs to the thymidylate kinase family.

It carries out the reaction dTMP + ATP = dTDP + ADP. Phosphorylation of dTMP to form dTDP in both de novo and salvage pathways of dTTP synthesis. The chain is Thymidylate kinase from Streptococcus pneumoniae (strain ATCC 700669 / Spain 23F-1).